The chain runs to 108 residues: UPF0060 membrane protein RSKD131_0092 (108 aa).

A run of 4 helical transmembrane segments spans residues Leu5 to Trp25, Ala32 to Thr52, Ala62 to Val82, and Arg86 to Pro106.

It belongs to the UPF0060 family.

The protein localises to the cell inner membrane. The polypeptide is UPF0060 membrane protein RSKD131_0092 (Cereibacter sphaeroides (strain KD131 / KCTC 12085) (Rhodobacter sphaeroides)).